The primary structure comprises 97 residues: Large ribosomal subunit protein eL37 (97 aa).

Lys-10 is modified (N6-acetyllysine). Zn(2+) is bound by residues Cys-19, Cys-22, Cys-34, and Cys-37. Residues 19 to 37 form a C4-type zinc finger; that stretch reads CRRCGSKAYHLQKSTCGKC. Ser-96 and Ser-97 each carry phosphoserine.

It belongs to the eukaryotic ribosomal protein eL37 family. Component of the large ribosomal subunit.

The protein resides in the cytoplasm. Functionally, component of the large ribosomal subunit. The ribosome is a large ribonucleoprotein complex responsible for the synthesis of proteins in the cell. The protein is Large ribosomal subunit protein eL37 (RPL37) of Bos taurus (Bovine).